The primary structure comprises 168 residues: Photosystem I assembly protein Ycf3 (168 aa).

3 TPR repeats span residues 35–68 (AFTY…EMDP), 72–105 (SYIL…NPFL), and 120–153 (GEQA…TPGN).

This sequence belongs to the Ycf3 family.

It is found in the plastid. It localises to the chloroplast thylakoid membrane. Its function is as follows. Essential for the assembly of the photosystem I (PSI) complex. May act as a chaperone-like factor to guide the assembly of the PSI subunits. In Pelargonium hortorum (Common geranium), this protein is Photosystem I assembly protein Ycf3.